Reading from the N-terminus, the 332-residue chain is Nucleoid-associated protein VVA0877 (332 aa).

The protein belongs to the YejK family.

The protein resides in the cytoplasm. The protein localises to the nucleoid. The chain is Nucleoid-associated protein VVA0877 from Vibrio vulnificus (strain YJ016).